A 206-amino-acid polypeptide reads, in one-letter code: 3-isopropylmalate dehydratase small subunit (206 aa).

Belongs to the LeuD family. LeuD type 1 subfamily. Heterodimer of LeuC and LeuD.

It catalyses the reaction (2R,3S)-3-isopropylmalate = (2S)-2-isopropylmalate. It functions in the pathway amino-acid biosynthesis; L-leucine biosynthesis; L-leucine from 3-methyl-2-oxobutanoate: step 2/4. In terms of biological role, catalyzes the isomerization between 2-isopropylmalate and 3-isopropylmalate, via the formation of 2-isopropylmaleate. The chain is 3-isopropylmalate dehydratase small subunit from Leptospira interrogans serogroup Icterohaemorrhagiae serovar copenhageni (strain Fiocruz L1-130).